A 115-amino-acid polypeptide reads, in one-letter code: Peptidyl-tRNA hydrolase (115 aa).

The protein belongs to the PTH2 family.

Its subcellular location is the cytoplasm. It carries out the reaction an N-acyl-L-alpha-aminoacyl-tRNA + H2O = an N-acyl-L-amino acid + a tRNA + H(+). The natural substrate for this enzyme may be peptidyl-tRNAs which drop off the ribosome during protein synthesis. The sequence is that of Peptidyl-tRNA hydrolase from Methanosarcina acetivorans (strain ATCC 35395 / DSM 2834 / JCM 12185 / C2A).